We begin with the raw amino-acid sequence, 361 residues long: Chorismate synthase (361 aa).

R48 is an NADP(+) binding site. FMN contacts are provided by residues 126–128, G269, 302–306, and N328; these read RSS and KPVPS.

It belongs to the chorismate synthase family. As to quaternary structure, homotetramer. The cofactor is FMNH2.

The enzyme catalyses 5-O-(1-carboxyvinyl)-3-phosphoshikimate = chorismate + phosphate. The protein operates within metabolic intermediate biosynthesis; chorismate biosynthesis; chorismate from D-erythrose 4-phosphate and phosphoenolpyruvate: step 7/7. Functionally, catalyzes the anti-1,4-elimination of the C-3 phosphate and the C-6 proR hydrogen from 5-enolpyruvylshikimate-3-phosphate (EPSP) to yield chorismate, which is the branch point compound that serves as the starting substrate for the three terminal pathways of aromatic amino acid biosynthesis. This reaction introduces a second double bond into the aromatic ring system. This is Chorismate synthase from Treponema denticola (strain ATCC 35405 / DSM 14222 / CIP 103919 / JCM 8153 / KCTC 15104).